Here is a 410-residue protein sequence, read N- to C-terminus: MALVNEHFLKLPGSYLFSDIAKKVNTFKITHPKRDIIRLGIGDVTRPLPKACIEAMHKAVEEMTSAETFRGYGPEQGYDFLIEAIIKNDYAPRGIHLSPTEVFVNDGAKSDTGNIGDILRHDNSVGVTDPIYPVYIDSNVMCGRAGVLDTESGKWSNVTYMPCTAENHFIPAIPEKRIDIVYLCYPNNPTGTTLTKAELKKWVDYALANDTLILFDAAYEAYIREPDIPHSIYEIKGAKKCAIEFRSFSKTAGFTGVRCGYTVVPKELTAATLEGERIPLNRLWNRRQCTKFNGTSYITQRAAEAIYTPEGKEQIQETINYYMTNARIMKEGLESTGLKVYGGVNAPYLWVKTPKGTSSWRFFDQMLYEANVVGTPGVGFGPSGEGYIRLTAFGERDDCIEAMRRIKNRL.

Substrate contacts are provided by Y15 and G42. Pyridoxal 5'-phosphate is bound by residues Y72, 108–109, Y132, N188, Y219, and 247–249; these read AK and SFS. 3 residues coordinate substrate: K109, Y132, and N188. K250 bears the N6-(pyridoxal phosphate)lysine mark. 2 residues coordinate pyridoxal 5'-phosphate: R258 and N293. The substrate site is built by N293 and R389.

Belongs to the class-I pyridoxal-phosphate-dependent aminotransferase family. LL-diaminopimelate aminotransferase subfamily. Homodimer. It depends on pyridoxal 5'-phosphate as a cofactor.

It catalyses the reaction (2S,6S)-2,6-diaminopimelate + 2-oxoglutarate = (S)-2,3,4,5-tetrahydrodipicolinate + L-glutamate + H2O + H(+). Its pathway is amino-acid biosynthesis; L-lysine biosynthesis via DAP pathway; LL-2,6-diaminopimelate from (S)-tetrahydrodipicolinate (aminotransferase route): step 1/1. Its function is as follows. Involved in the synthesis of meso-diaminopimelate (m-DAP or DL-DAP), required for both lysine and peptidoglycan biosynthesis. Catalyzes the direct conversion of tetrahydrodipicolinate to LL-diaminopimelate. Can also use m-DAP instead of LL-DAP as the amino-group donor. The protein is LL-diaminopimelate aminotransferase of Bacteroides fragilis (strain ATCC 25285 / DSM 2151 / CCUG 4856 / JCM 11019 / LMG 10263 / NCTC 9343 / Onslow / VPI 2553 / EN-2).